A 406-amino-acid chain; its full sequence is Riboflavin biosynthesis protein RibBA (406 aa).

Positions 1 to 209 (MSEREEFKFN…IADLIKYRLR (209 aa)) are DHBP synthase. Residues 33-34 (RE), D38, 148-152 (RAGHT), and E172 contribute to the D-ribulose 5-phosphate site. E34 lines the Mg(2+) pocket. Residue H151 coordinates Mg(2+). The GTP cyclohydrolase II stretch occupies residues 210 to 406 (RETLVEKVAS…VKKDKLGHMF (197 aa)). Residue 260–264 (RVHSE) participates in GTP binding. Zn(2+) is bound by residues C265, C276, and C278. Residues Q281, 304–306 (EGR), and T326 each bind GTP. Residue D338 is the Proton acceptor; for GTP cyclohydrolase activity of the active site. R340 functions as the Nucleophile; for GTP cyclohydrolase activity in the catalytic mechanism. Residues T361 and K366 each contribute to the GTP site.

The protein in the N-terminal section; belongs to the DHBP synthase family. It in the C-terminal section; belongs to the GTP cyclohydrolase II family. Mg(2+) serves as cofactor. It depends on Mn(2+) as a cofactor. Zn(2+) is required as a cofactor.

The catalysed reaction is D-ribulose 5-phosphate = (2S)-2-hydroxy-3-oxobutyl phosphate + formate + H(+). It carries out the reaction GTP + 4 H2O = 2,5-diamino-6-hydroxy-4-(5-phosphoribosylamino)-pyrimidine + formate + 2 phosphate + 3 H(+). Its pathway is cofactor biosynthesis; riboflavin biosynthesis; 2-hydroxy-3-oxobutyl phosphate from D-ribulose 5-phosphate: step 1/1. The protein operates within cofactor biosynthesis; riboflavin biosynthesis; 5-amino-6-(D-ribitylamino)uracil from GTP: step 1/4. Its function is as follows. Catalyzes the conversion of D-ribulose 5-phosphate to formate and 3,4-dihydroxy-2-butanone 4-phosphate. Functionally, catalyzes the conversion of GTP to 2,5-diamino-6-ribosylamino-4(3H)-pyrimidinone 5'-phosphate (DARP), formate and pyrophosphate. The chain is Riboflavin biosynthesis protein RibBA from Aquifex aeolicus (strain VF5).